The chain runs to 599 residues: Beta-(1--&gt;2)glucan export ATP-binding/permease protein NdvA (599 aa).

An ABC transmembrane type-1 domain is found at 21–301 (TITMCVASVL…ISAFINQTVT (281 aa)). The next 5 helical transmembrane spans lie at 22 to 42 (ITMCVASVLVALVTLAEPVLF), 55 to 75 (IFSPLLMWAALGGFNIMAAVF), 156 to 176 (MRMSLVLIVLGVIYVMIGQLV), 248 to 268 (MASTFSMVVVLVLGAYFVTKG), and 276 to 296 (IAFIGFAQLMIGRLDQISAFI). The ABC transporter domain occupies 335–569 (IVFDNVTYEF…GGRFSDLLRA (235 aa)). 368 to 375 (GPTGAGKT) serves as a coordination point for ATP.

Belongs to the ABC transporter superfamily. Beta-(1--&gt;2)glucan exporter (TC 3.A.1.108.1) family. In terms of assembly, homodimer.

The protein resides in the cell inner membrane. It carries out the reaction [(1-&gt;2)-beta-D-glucosyl](n)(in) + ATP + H2O = [(1-&gt;2)-beta-D-glucosyl](n)(out) + ADP + phosphate + H(+). Involved in beta-(1--&gt;2)glucan export. Its export to the periplasmic space is required to exert its action as a virulence factor. Transmembrane domains (TMD) form a pore in the inner membrane and the ATP-binding domain (NBD) is responsible for energy generation. This chain is Beta-(1--&gt;2)glucan export ATP-binding/permease protein NdvA, found in Brucella abortus (strain 2308).